A 396-amino-acid polypeptide reads, in one-letter code: Putative carbamoyltransferase YgeW (396 aa).

Carbamoyl phosphate is bound by residues 71–74 (STRT), Q98, 165–168 (HPTQ), and 330–331 (CL).

Belongs to the aspartate/ornithine carbamoyltransferase superfamily. As to quaternary structure, homotrimer.

This chain is Putative carbamoyltransferase YgeW (ygeW), found in Escherichia coli O157:H7.